The sequence spans 475 residues: MAEGSVMFSDVSIDFSQEEWDCLDPVQRDLYRDVMLENYSNLVSMGLYTPKPQVISLLEQGKEPWMVGRELTRGLCSDLESMCETKLLSLKKEVYEIELCQREIMGLTKHGLEYSSFGDVLEYRSRLAKQLGYPNGHFSQEIFTPEYMPTFIQQTFLTLQQIMNNEDRPFECKKCGKAFSQNSQFIQHQRIHIGEKSYECKECGKFFSCGSHVTRHLKIHTGEKPFECKECGKAFSCSSYLSQHQRIHTGKKPYECKECGKAFSYCSNLIDHQRIHTGEKPYACKVCGKAFTKSSQLFQHVRIHTGEKPYECKECGKAFTQSSKLVQHQRIHTGEKPYECKECGKAFSSGSALTNHQRIHTGEKPYDCKECGKAFTQSSQLRQHQRIHAGEKPFECLECGKAFTQNSQLFQHQRIHTDEKPYECNECGKAFNKCSNLTRHLRIHTGEKPYNCKECGKAFSSGSDLIRHQGIHTNE.

Residues Val-6–Ser-77 enclose the KRAB domain. 11 C2H2-type zinc fingers span residues Phe-170 to His-192, Tyr-198 to His-220, Phe-226 to His-248, Tyr-254 to His-276, Tyr-282 to His-304, Tyr-310 to His-332, Tyr-338 to His-360, Tyr-366 to His-388, Phe-394 to His-416, Tyr-422 to His-444, and Tyr-450 to His-472.

This sequence belongs to the krueppel C2H2-type zinc-finger protein family.

The protein localises to the nucleus. It is found in the cytoplasm. Functionally, may function as a transcriptional repressor, suppressing transcriptional activities mediated by MAPK signaling pathways. This is Zinc finger protein 383 (ZNF383) from Macaca fascicularis (Crab-eating macaque).